The sequence spans 206 residues: Probable GTP-binding protein EngB (206 aa).

The region spanning 25-198 (SRAEVAFAGR…AVRIEGWLAP (174 aa)) is the EngB-type G domain. Mg(2+)-binding residues include serine 40 and threonine 62.

Belongs to the TRAFAC class TrmE-Era-EngA-EngB-Septin-like GTPase superfamily. EngB GTPase family. Mg(2+) serves as cofactor.

Functionally, necessary for normal cell division and for the maintenance of normal septation. The chain is Probable GTP-binding protein EngB from Thiobacillus denitrificans (strain ATCC 25259 / T1).